The sequence spans 155 residues: Endoribonuclease YbeY (155 aa).

Zn(2+) is bound by residues His-118, His-122, and His-128.

It belongs to the endoribonuclease YbeY family. Requires Zn(2+) as cofactor.

The protein localises to the cytoplasm. In terms of biological role, single strand-specific metallo-endoribonuclease involved in late-stage 70S ribosome quality control and in maturation of the 3' terminus of the 16S rRNA. This is Endoribonuclease YbeY from Bordetella petrii (strain ATCC BAA-461 / DSM 12804 / CCUG 43448).